The primary structure comprises 31 residues: Alcohol dehydrogenase 1 (31 aa).

Zn(2+) is bound at residue C7.

The protein belongs to the zinc-containing alcohol dehydrogenase family. Class-P subfamily. Homodimer. The cofactor is Zn(2+).

It is found in the cytoplasm. It catalyses the reaction a primary alcohol + NAD(+) = an aldehyde + NADH + H(+). The catalysed reaction is a secondary alcohol + NAD(+) = a ketone + NADH + H(+). The sequence is that of Alcohol dehydrogenase 1 from Catharanthus roseus (Madagascar periwinkle).